A 282-amino-acid chain; its full sequence is Bifunctional protein FolD (282 aa).

Residues 162–164 (GRS), Ser-187, and Val-228 each bind NADP(+).

This sequence belongs to the tetrahydrofolate dehydrogenase/cyclohydrolase family. In terms of assembly, homodimer.

It catalyses the reaction (6R)-5,10-methylene-5,6,7,8-tetrahydrofolate + NADP(+) = (6R)-5,10-methenyltetrahydrofolate + NADPH. The catalysed reaction is (6R)-5,10-methenyltetrahydrofolate + H2O = (6R)-10-formyltetrahydrofolate + H(+). It participates in one-carbon metabolism; tetrahydrofolate interconversion. In terms of biological role, catalyzes the oxidation of 5,10-methylenetetrahydrofolate to 5,10-methenyltetrahydrofolate and then the hydrolysis of 5,10-methenyltetrahydrofolate to 10-formyltetrahydrofolate. In Thermus thermophilus (strain ATCC BAA-163 / DSM 7039 / HB27), this protein is Bifunctional protein FolD.